The chain runs to 759 residues: Short transient receptor potential channel 1 (759 aa).

The tract at residues Met-1–Glu-30 is disordered. At Met-1–Lys-311 the chain is on the cytoplasmic side. The span at Ser-15–Pro-28 shows a compositional bias: low complexity. ANK repeat units lie at residues Leu-46–Leu-75, Leu-83–Gln-109, and Met-124–Lys-146. Positions 155, 159, 161, and 164 each coordinate Zn(2+). Residues Pro-312–Ile-345 constitute an intramembrane region (discontinuously helical). Topologically, residues Ile-346–Lys-352 are cytoplasmic. Residues Phe-353–Tyr-370 traverse the membrane as a helical segment. Residues Ser-371–Arg-388 lie on the Extracellular side of the membrane. A helical transmembrane segment spans residues Ile-389 to Ile-405. Over Lys-406–Arg-421 the chain is Cytoplasmic. The chain crosses the membrane as a helical span at residues Asn-422 to Val-441. The Extracellular segment spans residues Ala-442–Leu-462. The chain crosses the membrane as a helical span at residues Val-463–Tyr-483. The Cytoplasmic segment spans residues Thr-484–Asp-502. A helical transmembrane segment spans residues Phe-503–Leu-524. Residues Tyr-525–Ala-589 lie on the Extracellular side of the membrane. A disulfide bridge links Cys-537 with Cys-542. The helical transmembrane segment at Val-590–Met-610 threads the bilayer. Residues Leu-611 to Asn-759 lie on the Cytoplasmic side of the membrane.

Belongs to the transient receptor (TC 1.A.4) family. STrpC subfamily. TRPC1 sub-subfamily. In terms of assembly, heterotetramer with TRPC4 and/or TRPC5. Forms a heteromeric ion channel with TRPC4, with a 1:3 TRPC1:TRPC4 stoichiometry. Unlike other TRP channel proteins, does not form a homomeric channel. Interacts with TRPC4AP. Interacts with ITPR3. Interacts with MX1 and RNF24. Interacts with FKBP4. Interacts with PLSCR1. Interacts with PKD2L2. Forms a heterotetramer with PKD2 with a 2:2 stoichiometry; has distinct channel properties separate from PKD2 or TRPC1 homomers alone. Activation of PRKCA induces phosphorylation of TRPC1 and subsequent Ca2+ entry into cells. As to expression, expressed in brain, hippocampus, amygdala, Purkinje cells and single neurons in the cortex and striatum.

The protein resides in the cell membrane. It carries out the reaction Ca(2+)(in) = Ca(2+)(out). It catalyses the reaction Na(+)(in) = Na(+)(out). The enzyme catalyses Li(+)(in) = Li(+)(out). The catalysed reaction is Cs(+)(in) = Cs(+)(out). May be operated by a phosphatidylinositol second messenger system activated by receptor tyrosine kinases or G-protein coupled receptors. Also activated by intracellular calcium store depletion. Forms a receptor-activated non-selective calcium permeant cation channel. Forms a heteromeric ion channel with TRPC4 or TRPC5 that has reduced calcium permeability compared to the homomeric TRPC4 or TRPC5 channel. Also permeable to monovalent ions including sodium, lithium and cesium ions. The protein is Short transient receptor potential channel 1 (Trpc1) of Rattus norvegicus (Rat).